The primary structure comprises 223 residues: Thiamine-phosphate synthase (223 aa).

Residues 37 to 41 and Asn69 each bind 4-amino-2-methyl-5-(diphosphooxymethyl)pyrimidine; that span reads QLREK. Residues Asp70 and Asp89 each contribute to the Mg(2+) site. Residue Ser108 coordinates 4-amino-2-methyl-5-(diphosphooxymethyl)pyrimidine. 134-136 contacts 2-[(2R,5Z)-2-carboxy-4-methylthiazol-5(2H)-ylidene]ethyl phosphate; that stretch reads TGT. Lys137 lines the 4-amino-2-methyl-5-(diphosphooxymethyl)pyrimidine pocket. 2-[(2R,5Z)-2-carboxy-4-methylthiazol-5(2H)-ylidene]ethyl phosphate-binding positions include Gly167 and 187–188; that span reads VS. Residues 197-223 form a disordered region; the sequence is AAATRKLQGSVDTASVESQLPSEEPSA. Residues 206 to 217 show a composition bias toward polar residues; that stretch reads SVDTASVESQLP.

This sequence belongs to the thiamine-phosphate synthase family. The cofactor is Mg(2+).

The enzyme catalyses 2-[(2R,5Z)-2-carboxy-4-methylthiazol-5(2H)-ylidene]ethyl phosphate + 4-amino-2-methyl-5-(diphosphooxymethyl)pyrimidine + 2 H(+) = thiamine phosphate + CO2 + diphosphate. The catalysed reaction is 2-(2-carboxy-4-methylthiazol-5-yl)ethyl phosphate + 4-amino-2-methyl-5-(diphosphooxymethyl)pyrimidine + 2 H(+) = thiamine phosphate + CO2 + diphosphate. It carries out the reaction 4-methyl-5-(2-phosphooxyethyl)-thiazole + 4-amino-2-methyl-5-(diphosphooxymethyl)pyrimidine + H(+) = thiamine phosphate + diphosphate. It functions in the pathway cofactor biosynthesis; thiamine diphosphate biosynthesis; thiamine phosphate from 4-amino-2-methyl-5-diphosphomethylpyrimidine and 4-methyl-5-(2-phosphoethyl)-thiazole: step 1/1. Condenses 4-methyl-5-(beta-hydroxyethyl)thiazole monophosphate (THZ-P) and 2-methyl-4-amino-5-hydroxymethyl pyrimidine pyrophosphate (HMP-PP) to form thiamine monophosphate (TMP). The sequence is that of Thiamine-phosphate synthase from Haloquadratum walsbyi (strain DSM 16790 / HBSQ001).